The sequence spans 268 residues: Small ribosomal subunit protein eS1 (268 aa).

A disordered region spans residues 1-21; sequence MAVGKNKGLSKGGKKGGKKKV.

The protein belongs to the eukaryotic ribosomal protein eS1 family. Component of the small ribosomal subunit. Mature ribosomes consist of a small (40S) and a large (60S) subunit. The 40S subunit contains about 33 different proteins and 1 molecule of RNA (18S). The 60S subunit contains about 49 different proteins and 3 molecules of RNA (28S, 5.8S and 5S).

It is found in the cytoplasm. Essential for oogenesis; required for late follicle cell development. The polypeptide is Small ribosomal subunit protein eS1 (Drosophila virilis (Fruit fly)).